A 104-amino-acid chain; its full sequence is Phosphate metabolism protein 6 (104 aa).

A helical membrane pass occupies residues 76–96 (IIVIIIVLLLYSLTMVGLFYV).

The protein resides in the vacuole membrane. In Saccharomyces cerevisiae (strain ATCC 204508 / S288c) (Baker's yeast), this protein is Phosphate metabolism protein 6 (PHM6).